We begin with the raw amino-acid sequence, 287 residues long: Aquaporin PIP2-1 (287 aa).

Methionine 1 is subject to N-acetylmethionine. Residues alanine 2–arginine 39 lie on the Cytoplasmic side of the membrane. An N6,N6-dimethyllysine; partial modification is found at lysine 3. A helical transmembrane segment spans residues alanine 40–isoleucine 60. Topologically, residues glycine 61–isoleucine 83 are extracellular. Residues alanine 84 to glycine 104 traverse the membrane as a helical segment. The Cytoplasmic segment spans residues histidine 105–alanine 125. An NPA 1 motif is present at residues asparagine 107–alanine 109. Residues leucine 126–phenylalanine 146 traverse the membrane as a helical segment. At glutamine 147 to threonine 167 the chain is on the extracellular side. Residues glycine 168–alanine 188 traverse the membrane as a helical segment. The Cytoplasmic portion of the chain corresponds to threonine 189–proline 201. A helical membrane pass occupies residues valine 202–isoleucine 222. Residues threonine 223 to tryptophan 249 are Extracellular-facing. The NPA 2 signature appears at asparagine 228–alanine 230. Residues isoleucine 250–leucine 270 form a helical membrane-spanning segment. At arginine 271–valine 287 the chain is on the cytoplasmic side. A phosphoserine mark is found at serine 280 and serine 283.

The protein belongs to the MIP/aquaporin (TC 1.A.8) family. PIP (TC 1.A.8.11) subfamily. In terms of processing, ubiquitinated by RMA1, leading to proteasomal degradation. Post-translationally, the phosphorylation at Ser-280 and Ser-283 is altered by salt (NaCl) and hydrogen peroxide H(2)O(2) treatments. Phosphorylation of Ser-283 is required for plasma membrane targeting. As to expression, predominantly expressed in roots and green siliques. Also expressed at lower level above ground and in flower buds.

The protein localises to the cell membrane. Water channel required to facilitate the transport of water across cell membrane. Probably involved in root water uptake. Its function is impaired by Hg(2+). The polypeptide is Aquaporin PIP2-1 (PIP2-1) (Arabidopsis thaliana (Mouse-ear cress)).